Here is a 122-residue protein sequence, read N- to C-terminus: Large ribosomal subunit protein bL12 (122 aa).

The protein belongs to the bacterial ribosomal protein bL12 family. As to quaternary structure, homodimer. Part of the ribosomal stalk of the 50S ribosomal subunit. Forms a multimeric L10(L12)X complex, where L10 forms an elongated spine to which 2 to 4 L12 dimers bind in a sequential fashion. Binds GTP-bound translation factors.

Forms part of the ribosomal stalk which helps the ribosome interact with GTP-bound translation factors. Is thus essential for accurate translation. This chain is Large ribosomal subunit protein bL12, found in Actinobacillus pleuropneumoniae serotype 5b (strain L20).